The chain runs to 940 residues: Protein translocase subunit SecA (940 aa).

ATP-binding positions include Gln87, 105–109, and Asp494; that span reads GEGKT. Residues 879 to 940 form a disordered region; it reads AQQQKKAVEG…KCHGASEASV (62 aa). Positions 884–898 are enriched in basic and acidic residues; that stretch reads KAVEGRATADGKLDE. The span at 900–915 shows a compositional bias: low complexity; that stretch reads SVAAAARPAAASRPAV. Zn(2+) contacts are provided by Cys921, Cys923, Cys932, and His933.

This sequence belongs to the SecA family. As to quaternary structure, monomer and homodimer. Part of the essential Sec protein translocation apparatus which comprises SecA, SecYEG and auxiliary proteins SecDF-YajC and YidC. It depends on Zn(2+) as a cofactor.

The protein localises to the cell inner membrane. The protein resides in the cytoplasm. The catalysed reaction is ATP + H2O + cellular proteinSide 1 = ADP + phosphate + cellular proteinSide 2.. In terms of biological role, part of the Sec protein translocase complex. Interacts with the SecYEG preprotein conducting channel. Has a central role in coupling the hydrolysis of ATP to the transfer of proteins into and across the cell membrane, serving as an ATP-driven molecular motor driving the stepwise translocation of polypeptide chains across the membrane. This Myxococcus xanthus (strain DK1622) protein is Protein translocase subunit SecA.